A 591-amino-acid polypeptide reads, in one-letter code: L-fucose isomerase (591 aa).

Catalysis depends on proton acceptor residues Glu337 and Asp361. Positions 337, 361, and 528 each coordinate Mn(2+).

The protein belongs to the L-fucose isomerase family. In terms of assembly, homohexamer. Requires Mn(2+) as cofactor.

The protein localises to the cytoplasm. It catalyses the reaction L-fucose = L-fuculose. The protein operates within carbohydrate degradation; L-fucose degradation; L-lactaldehyde and glycerone phosphate from L-fucose: step 1/3. In terms of biological role, converts the aldose L-fucose into the corresponding ketose L-fuculose. In Salmonella paratyphi B (strain ATCC BAA-1250 / SPB7), this protein is L-fucose isomerase.